Reading from the N-terminus, the 408-residue chain is Dual-specificity RNA methyltransferase RlmN (408 aa).

Glu120 (proton acceptor) is an active-site residue. One can recognise a Radical SAM core domain in the interval Glu126–Leu375. An intrachain disulfide couples Cys133 to Cys378. [4Fe-4S] cluster contacts are provided by Cys140, Cys144, and Cys147. Residues Gly204 to Glu205, Ser236, Ser258 to His260, and Asn335 contribute to the S-adenosyl-L-methionine site. Cys378 (S-methylcysteine intermediate) is an active-site residue.

The protein belongs to the radical SAM superfamily. RlmN family. [4Fe-4S] cluster serves as cofactor.

It is found in the cytoplasm. The enzyme catalyses adenosine(2503) in 23S rRNA + 2 reduced [2Fe-2S]-[ferredoxin] + 2 S-adenosyl-L-methionine = 2-methyladenosine(2503) in 23S rRNA + 5'-deoxyadenosine + L-methionine + 2 oxidized [2Fe-2S]-[ferredoxin] + S-adenosyl-L-homocysteine. It carries out the reaction adenosine(37) in tRNA + 2 reduced [2Fe-2S]-[ferredoxin] + 2 S-adenosyl-L-methionine = 2-methyladenosine(37) in tRNA + 5'-deoxyadenosine + L-methionine + 2 oxidized [2Fe-2S]-[ferredoxin] + S-adenosyl-L-homocysteine. Functionally, specifically methylates position 2 of adenine 2503 in 23S rRNA and position 2 of adenine 37 in tRNAs. m2A2503 modification seems to play a crucial role in the proofreading step occurring at the peptidyl transferase center and thus would serve to optimize ribosomal fidelity. The sequence is that of Dual-specificity RNA methyltransferase RlmN from Rhizobium leguminosarum bv. trifolii (strain WSM2304).